Here is a 313-residue protein sequence, read N- to C-terminus: Glutaminase (313 aa).

Substrate contacts are provided by serine 64, asparagine 116, glutamate 163, asparagine 170, tyrosine 194, tyrosine 246, and valine 264.

This sequence belongs to the glutaminase family. Homotetramer.

It catalyses the reaction L-glutamine + H2O = L-glutamate + NH4(+). In Exiguobacterium sp. (strain ATCC BAA-1283 / AT1b), this protein is Glutaminase.